Here is a 132-residue protein sequence, read N- to C-terminus: Large ribosomal subunit protein uL14 (132 aa).

It belongs to the universal ribosomal protein uL14 family. Part of the 50S ribosomal subunit. Forms a cluster with proteins L3 and L24e, part of which may contact the 16S rRNA in 2 intersubunit bridges.

Its function is as follows. Binds to 23S rRNA. Forms part of two intersubunit bridges in the 70S ribosome. This is Large ribosomal subunit protein uL14 from Picrophilus torridus (strain ATCC 700027 / DSM 9790 / JCM 10055 / NBRC 100828 / KAW 2/3).